The chain runs to 100 residues: Large ribosomal subunit protein uL23 (100 aa).

It belongs to the universal ribosomal protein uL23 family. As to quaternary structure, part of the 50S ribosomal subunit. Contacts protein L29, and trigger factor when it is bound to the ribosome.

In terms of biological role, one of the early assembly proteins it binds 23S rRNA. One of the proteins that surrounds the polypeptide exit tunnel on the outside of the ribosome. Forms the main docking site for trigger factor binding to the ribosome. The protein is Large ribosomal subunit protein uL23 of Mycobacterium ulcerans (strain Agy99).